Reading from the N-terminus, the 577-residue chain is Arginine--tRNA ligase (577 aa).

The 'HIGH' region motif lies at 122–132; that stretch reads PNVAKEMHVGH.

The protein belongs to the class-I aminoacyl-tRNA synthetase family. In terms of assembly, monomer.

It localises to the cytoplasm. It carries out the reaction tRNA(Arg) + L-arginine + ATP = L-arginyl-tRNA(Arg) + AMP + diphosphate. The polypeptide is Arginine--tRNA ligase (Escherichia coli O139:H28 (strain E24377A / ETEC)).